The sequence spans 281 residues: MSEQTIYGANTPGGSGPRTKIRTHHLQRWKADGHKWAMLTAYDYSTARIFDEAGIPVLLVGDSAANVVYGYDTTVPISIDELIPLVRGVVRGAPHALVVADLPFGSYEAGPTAALAAATRFLKDGGAHAVKLEGGERVAEQIACLTAAGIPVMAHIGFTPQSVNTLGGFRVQGRGDAAEQTIADAIAVAEAGAFAVVMEMVPAELATQITGKLTIPTVGIGAGPNCDGQVLVWQDMAGFSGAKTARFVKRYADVGGELRRAAMQYAQEVAGGVFPADEHSF.

Residues 1–20 form a disordered region; that stretch reads MSEQTIYGANTPGGSGPRTK. Residues D62 and D101 each coordinate Mg(2+). 3-methyl-2-oxobutanoate-binding positions include 62-63, D101, and K131; that span reads DS. Mg(2+) is bound at residue E133. Residue E199 is the Proton acceptor of the active site.

This sequence belongs to the PanB family. In terms of assembly, homodecamer; pentamer of dimers. The cofactor is Mg(2+).

It localises to the cytoplasm. It catalyses the reaction 3-methyl-2-oxobutanoate + (6R)-5,10-methylene-5,6,7,8-tetrahydrofolate + H2O = 2-dehydropantoate + (6S)-5,6,7,8-tetrahydrofolate. The protein operates within cofactor biosynthesis; (R)-pantothenate biosynthesis; (R)-pantoate from 3-methyl-2-oxobutanoate: step 1/2. In terms of biological role, catalyzes the reversible reaction in which hydroxymethyl group from 5,10-methylenetetrahydrofolate is transferred onto alpha-ketoisovalerate to form ketopantoate. This Mycobacterium bovis (strain ATCC BAA-935 / AF2122/97) protein is 3-methyl-2-oxobutanoate hydroxymethyltransferase.